The primary structure comprises 538 residues: RNA-binding protein RO60 (538 aa).

The TROVE domain occupies 16-369; that stretch reads VPNSEGCYVW…SFKLVEPTGK (354 aa). The tract at residues 120 to 284 is RNA-binding; that stretch reads RIPTHLFTFI…DMPLTALLRN (165 aa). The segment at 361–538 is VWFA-like domain; sequence FKLVEPTGKR…VIRNFTLDLI (178 aa). A divalent metal cation-binding residues include Ser378, Ser380, and Thr445.

It belongs to the Ro 60 kDa family.

Its subcellular location is the cytoplasm. Functionally, RNA-binding protein that binds to misfolded non-coding RNAs, pre-5S rRNA, and several small cytoplasmic RNA molecules known as Y RNAs. May play roles in cilia formation and/or maintenance. This is RNA-binding protein RO60 from Xenopus laevis (African clawed frog).